The primary structure comprises 88 residues: Small ribosomal subunit protein bS20 (88 aa).

Belongs to the bacterial ribosomal protein bS20 family. As to quaternary structure, part of the 30S ribosomal subunit.

Binds directly to 16S ribosomal RNA. The protein is Small ribosomal subunit protein bS20 (rpsT) of Bacillus subtilis (strain 168).